A 243-amino-acid polypeptide reads, in one-letter code: Cell division protein ZipA (243 aa).

Residues 1 to 4 (MSDM) are Periplasmic-facing. A helical transmembrane segment spans residues 5–25 (AMIRIGILIAGLLLVAAIFLF). Topologically, residues 26–243 (GRPKKSPQGR…APPLTKSPRW (218 aa)) are cytoplasmic. Residues 30–89 (KSPQGRRVDKDEGQPRERREPVISSEFGVEDDAAERAEGVEQSELNLEGQDASGGNEVGK) form a disordered region. Residues 35 to 50 (RRVDKDEGQPRERREP) are compositionally biased toward basic and acidic residues.

The protein belongs to the ZipA family. In terms of assembly, interacts with FtsZ via their C-terminal domains.

It localises to the cell inner membrane. Functionally, essential cell division protein that stabilizes the FtsZ protofilaments by cross-linking them and that serves as a cytoplasmic membrane anchor for the Z ring. Also required for the recruitment to the septal ring of downstream cell division proteins. The chain is Cell division protein ZipA from Xanthomonas euvesicatoria pv. vesicatoria (strain 85-10) (Xanthomonas campestris pv. vesicatoria).